The sequence spans 2209 residues: Genome polyprotein (2209 aa).

Gly-2 carries N-myristoyl glycine; by host lipidation. At 2–1520 the chain is on the cytoplasmic side; it reads GAQVSSQKVG…NINRAMTILQ (1519 aa). Residues 580 to 600 form an amphipathic alpha-helix region; sequence GLGQMLESMIDNTVRETVGAA. Active-site for protease 2A activity residues include His-901 and Asp-919. Positions 936 and 938 each coordinate Zn(2+). Cys-990 serves as the catalytic For protease 2A activity. Zn(2+) contacts are provided by Cys-996 and His-998. Positions 1128-1200 are membrane-binding; that stretch reads GDSWLKKFTE…HQSCPSQEHQ (73 aa). Residues 1128 to 1266 form an oligomerization region; sequence GDSWLKKFTE…SPGTGKSVAT (139 aa). Residues 1149 to 1153 are RNA-binding; sequence SNKIS. The SF3 helicase domain maps to 1232–1388; that stretch reads EHTINNYIQF…NEYSRDGKLN (157 aa). Residue 1256–1263 coordinates ATP; sequence GSPGTGKS. 4 residues coordinate Zn(2+): Cys-1396, Cys-1399, Cys-1408, and Cys-1413. The C4-type zinc finger occupies 1396 to 1413; the sequence is CKNCHQPANFKRCCPLVC. Residues 1440 to 1447 form an RNA-binding region; that stretch reads ERNRRSNI. The tract at residues 1451–1456 is oligomerization; the sequence is MEALFQ. The stretch at 1521 to 1536 is an intramembrane region; that stretch reads AVTTFAAVAGVVYVMY. The Cytoplasmic segment spans residues 1537–2209; that stretch reads KLFAGHQGAY…TLYRRWLDSF (673 aa). O-(5'-phospho-RNA)-tyrosine is present on Tyr-1546. In terms of domain architecture, Peptidase C3 spans 1566–1744; the sequence is GPGFDYAVAM…FAAALKRSYF (179 aa). Catalysis depends on for protease 3C activity residues His-1605, Glu-1636, and Cys-1712. Residues 1975-2090 form the RdRp catalytic domain; that stretch reads EKLFAFDYTG…SYPHEVDASL (116 aa). Mg(2+) is bound by residues Asp-1981 and Asp-2076.

It belongs to the picornaviruses polyprotein family. In terms of assembly, interacts with capsid protein VP1 and capsid protein VP3 to form heterotrimeric protomers. As to quaternary structure, interacts with capsid protein VP0, and capsid protein VP3 to form heterotrimeric protomers. Interacts with human PVR. Five protomers subsequently associate to form pentamers which serve as building blocks for the capsid. Interacts with capsid protein VP2, capsid protein VP3 and capsid protein VP4 following cleavage of capsid protein VP0. Interacts with capsid protein VP1 and capsid protein VP3 in the mature capsid. In terms of assembly, interacts with capsid protein VP0 and capsid protein VP1 to form heterotrimeric protomers. Five protomers subsequently associate to form pentamers which serve as building blocks for the capsid. Interacts with capsid protein VP4 in the mature capsid. Interacts with protein 2C; this interaction may be important for virion morphogenesis. As to quaternary structure, interacts with capsid protein VP1 and capsid protein VP3. Homodimer. In terms of assembly, homohexamer; forms a hexameric ring structure with 6-fold symmetry characteristic of AAA+ ATPases. Interacts (via N-terminus) with host RTN3 (via reticulon domain); this interaction is important for viral replication. Interacts with capsid protein VP3; this interaction may be important for virion morphogenesis. As to quaternary structure, interacts with protein 3CD. Homodimer. Interacts with host GBF1. Interacts (via GOLD domain) with host ACBD3 (via GOLD domain); this interaction allows the formation of a viral protein 3A/ACBD3 heterotetramer with a 2:2 stoichiometry, which will stimulate the recruitment of host PI4KB in order to synthesize PI4P at the viral RNA replication sites. In terms of assembly, interacts with RNA-directed RNA polymerase. As to quaternary structure, interacts with protein 3AB and with RNA-directed RNA polymerase. Interacts with Viral protein genome-linked and with protein 3CD. Mg(2+) serves as cofactor. Specific enzymatic cleavages in vivo by the viral proteases yield processing intermediates and the mature proteins. In terms of processing, myristoylation is required for the formation of pentamers during virus assembly. Further assembly of 12 pentamers and a molecule of genomic RNA generates the provirion. Post-translationally, during virion maturation, immature virions are rendered infectious following cleavage of VP0 into VP4 and VP2. This maturation seems to be an autocatalytic event triggered by the presence of RNA in the capsid and it is followed by a conformational change infectious virion. Myristoylation is required during RNA encapsidation and formation of the mature virus particle. In terms of processing, VPg is uridylylated by the polymerase into VPg-pUpU. This acts as a nucleotide-peptide primer for the genomic RNA replication.

Its subcellular location is the virion. The protein resides in the host cytoplasm. It localises to the host cytoplasmic vesicle membrane. It is found in the host nucleus. The enzyme catalyses a ribonucleoside 5'-triphosphate + H2O = a ribonucleoside 5'-diphosphate + phosphate + H(+). It carries out the reaction Selective cleavage of Tyr-|-Gly bond in the picornavirus polyprotein.. It catalyses the reaction RNA(n) + a ribonucleoside 5'-triphosphate = RNA(n+1) + diphosphate. The catalysed reaction is Selective cleavage of Gln-|-Gly bond in the poliovirus polyprotein. In other picornavirus reactions Glu may be substituted for Gln, and Ser or Thr for Gly.. Its activity is regulated as follows. Replication or transcription is subject to high level of random mutations by the nucleotide analog ribavirin. In terms of biological role, forms an icosahedral capsid of pseudo T=3 symmetry with capsid proteins VP2 and VP3. The capsid is 300 Angstroms in diameter, composed of 60 copies of each capsid protein and enclosing the viral positive strand RNA genome. Capsid protein VP1 mainly forms the vertices of the capsid. Capsid protein VP1 interacts with host cell receptor PVR to provide virion attachment to target host cells. This attachment induces virion internalization predominantly through clathrin- and caveolin-independent endocytosis in Hela cells and through caveolin-mediated endocytosis in brain microvascular endothelial cells. Tyrosine kinases are probably involved in the entry process. Virus binding to PVR induces increased junctional permeability and rearrangement of junctional proteins. Modulation of endothelial tight junctions, as well as cytolytic infection of endothelial cells themselves, may result in loss of endothelial integrity which may help the virus to reach the CNS. After binding to its receptor, the capsid undergoes conformational changes. Capsid protein VP1 N-terminus (that contains an amphipathic alpha-helix) and capsid protein VP4 are externalized. Together, they shape a pore in the host membrane through which viral genome is translocated to host cell cytoplasm. Forms an icosahedral capsid of pseudo T=3 symmetry with capsid proteins VP2 and VP3. The capsid is 300 Angstroms in diameter, composed of 60 copies of each capsid protein and enclosing the viral positive strand RNA genome. Its function is as follows. Lies on the inner surface of the capsid shell. After binding to the host receptor, the capsid undergoes conformational changes. Capsid protein VP4 is released, Capsid protein VP1 N-terminus is externalized, and together, they shape a pore in the host membrane through which the viral genome is translocated into the host cell cytoplasm. Functionally, component of immature procapsids, which is cleaved into capsid proteins VP4 and VP2 after maturation. Allows the capsid to remain inactive before the maturation step. In terms of biological role, cysteine protease that cleaves viral polyprotein and specific host proteins. It is responsible for the autocatalytic cleavage between the P1 and P2 regions, which is the first cleavage occurring in the polyprotein. Also cleaves the host translation initiation factor EIF4G1, in order to shut down the capped cellular mRNA translation. Inhibits the host nucleus-cytoplasm protein and RNA trafficking by cleaving host members of the nuclear pores including NUP98, NUP62 and NUP153. Counteracts stress granule formation probably by antagonizing its assembly or promoting its dissassembly. Cleaves and inhibits host IFIH1/MDA5, thereby inhibiting the type-I IFN production and the establishment of the antiviral state. Cleaves and inhibits host MAVS, thereby inhibiting the type-I IFN production and the establishment of the antiviral state. Plays an essential role in the virus replication cycle by acting as a viroporin. Creates a pore in the host endoplasmic reticulum and as a consequence releases Ca2+ in the cytoplasm of infected cell. In turn, high levels of cytoplasmic calcium may trigger membrane trafficking and transport of viral ER-associated proteins to viroplasms, sites of viral genome replication. Its function is as follows. Induces and associates with structural rearrangements of intracellular membranes. Displays RNA-binding, nucleotide binding and NTPase activities. May play a role in virion morphogenesis and viral RNA encapsidation by interacting with the capsid protein VP3. Functionally, localizes the viral replication complex to the surface of membranous vesicles. Together with protein 3CD binds the Cis-Active RNA Element (CRE) which is involved in RNA synthesis initiation. Acts as a cofactor to stimulate the activity of 3D polymerase, maybe through a nucleid acid chaperone activity. In terms of biological role, localizes the viral replication complex to the surface of membranous vesicles. It inhibits host cell endoplasmic reticulum-to-Golgi apparatus transport and causes the disassembly of the Golgi complex, possibly through GBF1 interaction. This would result in depletion of MHC, trail receptors and IFN receptors at the host cell surface. Plays an essential role in viral RNA replication by recruiting ACBD3 and PI4KB at the viral replication sites, thereby allowing the formation of the rearranged membranous structures where viral replication takes place. Acts as a primer for viral RNA replication and remains covalently bound to viral genomic RNA. VPg is uridylylated prior to priming replication into VPg-pUpU. The oriI viral genomic sequence may act as a template for this. The VPg-pUpU is then used as primer on the genomic RNA poly(A) by the RNA-dependent RNA polymerase to replicate the viral genome. During genome replication, the VPg-RNA linkage is removed by the host TDP2, thereby accelerating replication. During the late stage of the replication cycle, host TDP2 is excluded from sites of viral RNA synthesis and encapsidation, allowing for the generation of progeny virions. Its function is as follows. Involved in the viral replication complex and viral polypeptide maturation. It exhibits protease activity with a specificity and catalytic efficiency that is different from protease 3C. Protein 3CD lacks polymerase activity. Protein 3CD binds to the 5'UTR of the viral genome. Functionally, major viral protease that mediates proteolytic processing of the polyprotein. Cleaves host EIF5B, contributing to host translation shutoff. Also cleaves host PABPC1, contributing to host translation shutoff. Cleaves host RIGI and thus contributes to the inhibition of type I interferon production. Cleaves host NLRP1, triggers host N-glycine-mediated degradation of the autoinhibitory NLRP1 N-terminal fragment. Inhibits the integrated stress response (ISR) in the infected cell by cleaving host G3BP1. Stress granule formation is thus inhibited, which allows protein synthesis and viral replication. In terms of biological role, replicates the viral genomic RNA on the surface of intracellular membranes. May form linear arrays of subunits that propagate along a strong head-to-tail interaction called interface-I. Covalently attaches UMP to a tyrosine of VPg, which is used to prime RNA synthesis. The positive stranded RNA genome is first replicated at virus induced membranous vesicles, creating a dsRNA genomic replication form. This dsRNA is then used as template to synthesize positive stranded RNA genomes. ss(+)RNA genomes are either translated, replicated or encapsidated. The protein is Genome polyprotein of Homo sapiens (Human).